The following is a 353-amino-acid chain: Photosystem II D2 protein (353 aa).

Position 2 is an N-acetylthreonine (T2). T2 is modified (phosphothreonine). A helical membrane pass occupies residues 41–61; the sequence is CAYFAVGGWFTGTTFVTSWYT. Chlorophyll a is bound at residue H118. A helical transmembrane segment spans residues 125-141; sequence GFMLRQFELARSVQLRP. Residues Q130 and N143 each contribute to the pheophytin a site. Residues 153–166 form a helical membrane-spanning segment; the sequence is VFVSVFLIYPLGQS. A chlorophyll a-binding site is contributed by H198. A helical transmembrane segment spans residues 208 to 228; sequence AALLCAIHGATVENTLFEDGD. A plastoquinone contacts are provided by H215 and F262. H215 serves as a coordination point for Fe cation. H269 lines the Fe cation pocket. Residues 279-295 form a helical membrane-spanning segment; the sequence is GLWMSALGVVGLALNLR.

This sequence belongs to the reaction center PufL/M/PsbA/D family. In terms of assembly, PSII is composed of 1 copy each of membrane proteins PsbA, PsbB, PsbC, PsbD, PsbE, PsbF, PsbH, PsbI, PsbJ, PsbK, PsbL, PsbM, PsbT, PsbX, PsbY, PsbZ, Psb30/Ycf12, at least 3 peripheral proteins of the oxygen-evolving complex and a large number of cofactors. It forms dimeric complexes. The D1/D2 heterodimer binds P680, chlorophylls that are the primary electron donor of PSII, and subsequent electron acceptors. It shares a non-heme iron and each subunit binds pheophytin, quinone, additional chlorophylls, carotenoids and lipids. There is also a Cl(-1) ion associated with D1 and D2, which is required for oxygen evolution. The PSII complex binds additional chlorophylls, carotenoids and specific lipids. is required as a cofactor.

Its subcellular location is the plastid. It localises to the chloroplast thylakoid membrane. The catalysed reaction is 2 a plastoquinone + 4 hnu + 2 H2O = 2 a plastoquinol + O2. Its function is as follows. Photosystem II (PSII) is a light-driven water:plastoquinone oxidoreductase that uses light energy to abstract electrons from H(2)O, generating O(2) and a proton gradient subsequently used for ATP formation. It consists of a core antenna complex that captures photons, and an electron transfer chain that converts photonic excitation into a charge separation. The D1/D2 (PsbA/PsbD) reaction center heterodimer binds P680, the primary electron donor of PSII as well as several subsequent electron acceptors. D2 is needed for assembly of a stable PSII complex. In Ipomoea purpurea (Common morning glory), this protein is Photosystem II D2 protein.